We begin with the raw amino-acid sequence, 624 residues long: Bifunctional 3'-phosphoadenosine 5'-phosphosulfate synthase 1 (624 aa).

Residue Met1 is modified to N-acetylmethionine. An adenylyl-sulfate kinase region spans residues 1-225 (MEIPGSLCKK…VVELLQERDI (225 aa)). An N6-acetyllysine modification is found at Lys12. Residue 62–67 (GAGKTT) participates in ATP binding. Residues 89-92 (DNIR), Phe101, 106-109 (REEN), 132-133 (IS), Lys171, and 184-185 (GF) contribute to the adenosine 5'-phosphosulfate site. Residues Cys207, Cys212, 419–422 (QLRN), 521–525 (GRDPA), and Ala563 contribute to the ATP site. Residues 234-624 (VKELYVPENK…VEYYKSLEKA (391 aa)) form a sulfate adenylyltransferase region.

The protein in the N-terminal section; belongs to the APS kinase family. In the C-terminal section; belongs to the sulfate adenylyltransferase family. As to quaternary structure, homodimer. In terms of tissue distribution, expressed in the neonatal brain and in cartilage.

It catalyses the reaction sulfate + ATP + H(+) = adenosine 5'-phosphosulfate + diphosphate. It carries out the reaction adenosine 5'-phosphosulfate + ATP = 3'-phosphoadenylyl sulfate + ADP + H(+). The protein operates within sulfur metabolism; sulfate assimilation. Its function is as follows. Bifunctional enzyme with both ATP sulfurylase and APS kinase activity, which mediates two steps in the sulfate activation pathway. The first step is the transfer of a sulfate group to ATP to yield adenosine 5'-phosphosulfate (APS), and the second step is the transfer of a phosphate group from ATP to APS yielding 3'-phosphoadenylylsulfate (PAPS: activated sulfate donor used by sulfotransferase). In mammals, PAPS is the sole source of sulfate; APS appears to be only an intermediate in the sulfate-activation pathway. Required for normal biosynthesis of sulfated L-selectin ligands in endothelial cells. The sequence is that of Bifunctional 3'-phosphoadenosine 5'-phosphosulfate synthase 1 (Papss1) from Mus musculus (Mouse).